A 186-amino-acid chain; its full sequence is Putative 5'(3')-deoxyribonucleotidase (186 aa).

The active-site Nucleophile is the Asp-6. Asp-6, Asp-8, and Asp-137 together coordinate Mg(2+). The active-site Proton donor is the Asp-8.

It belongs to the 5'(3')-deoxyribonucleotidase family. Mg(2+) is required as a cofactor.

Functionally, dephosphorylates the 5' and 2'(3')-phosphates of deoxyribonucleotides. This Bordetella bronchiseptica (strain ATCC BAA-588 / NCTC 13252 / RB50) (Alcaligenes bronchisepticus) protein is Putative 5'(3')-deoxyribonucleotidase.